Here is a 113-residue protein sequence, read N- to C-terminus: Hydrogenase maturation factor HypA (113 aa).

Histidine 2 serves as a coordination point for Ni(2+). Residues cysteine 73, cysteine 76, cysteine 89, and cysteine 92 each coordinate Zn(2+).

Belongs to the HypA/HybF family.

Functionally, involved in the maturation of [NiFe] hydrogenases. Required for nickel insertion into the metal center of the hydrogenase. In Chlorobaculum parvum (strain DSM 263 / NCIMB 8327) (Chlorobium vibrioforme subsp. thiosulfatophilum), this protein is Hydrogenase maturation factor HypA.